The primary structure comprises 280 residues: Putative pyruvate, phosphate dikinase regulatory protein (280 aa).

158–165 (GVSRTSKT) contributes to the ADP binding site.

This sequence belongs to the pyruvate, phosphate/water dikinase regulatory protein family. PDRP subfamily.

It catalyses the reaction N(tele)-phospho-L-histidyl/L-threonyl-[pyruvate, phosphate dikinase] + ADP = N(tele)-phospho-L-histidyl/O-phospho-L-threonyl-[pyruvate, phosphate dikinase] + AMP + H(+). It carries out the reaction N(tele)-phospho-L-histidyl/O-phospho-L-threonyl-[pyruvate, phosphate dikinase] + phosphate + H(+) = N(tele)-phospho-L-histidyl/L-threonyl-[pyruvate, phosphate dikinase] + diphosphate. In terms of biological role, bifunctional serine/threonine kinase and phosphorylase involved in the regulation of the pyruvate, phosphate dikinase (PPDK) by catalyzing its phosphorylation/dephosphorylation. The protein is Putative pyruvate, phosphate dikinase regulatory protein of Lactobacillus johnsonii (strain CNCM I-12250 / La1 / NCC 533).